The sequence spans 246 residues: UDP-N-acetyl-D-mannosaminuronic acid transferase (246 aa).

Belongs to the glycosyltransferase 26 family.

It carries out the reaction UDP-N-acetyl-alpha-D-mannosaminouronate + N-acetyl-alpha-D-glucosaminyl-di-trans,octa-cis-undecaprenyl diphosphate = beta-D-ManNAcA-(1-&gt;4)-alpha-D-GlcNAc-di-trans,octa-cis-undecaprenyl diphosphate + UDP + H(+). The protein operates within bacterial outer membrane biogenesis; enterobacterial common antigen biosynthesis. Catalyzes the synthesis of Und-PP-GlcNAc-ManNAcA (Lipid II), the second lipid-linked intermediate involved in enterobacterial common antigen (ECA) synthesis. This is UDP-N-acetyl-D-mannosaminuronic acid transferase from Salmonella paratyphi A (strain ATCC 9150 / SARB42).